Consider the following 114-residue polypeptide: Vesicle-associated membrane protein 2 (114 aa).

Positions 1 to 11 are enriched in pro residues; it reads MSAPAAGPPAA. The interval 1 to 31 is disordered; the sequence is MSAPAAGPPAAAPGDGAPQGPPNLTSNRRLQ. The residue at position 2 (Ser2) is an N-acetylserine. Over 2–92 the chain is Cytoplasmic; the sequence is SAPAAGPPAA…KRKYWWKNMK (91 aa). The 61-residue stretch at 29–89 folds into the v-SNARE coiled-coil homology domain; that stretch reads RLQQTQAQVD…AKLKRKYWWK (61 aa). A helical; Anchor for type IV membrane protein membrane pass occupies residues 93 to 111; it reads MMIIMGVICAIILIIIIVY. The Vesicular portion of the chain corresponds to 112-114; that stretch reads FST.

It belongs to the synaptobrevin family.

The protein localises to the cytoplasmic vesicle. The protein resides in the secretory vesicle. It is found in the synaptic vesicle membrane. It localises to the cell membrane. Its function is as follows. Involved in the targeting and/or fusion of transport vesicles to their target membrane. Major SNARE protein of synaptic vesicles which mediates fusion of synaptic vesicles to release neurotransmitters. Essential for fast vesicular exocytosis and activity-dependent neurotransmitter release as well as fast endocytosis that mediates rapid reuse of synaptic vesicles. The polypeptide is Vesicle-associated membrane protein 2 (vamp2) (Xenopus laevis (African clawed frog)).